The primary structure comprises 173 residues: Translation initiation factor IF-3 (173 aa).

It belongs to the IF-3 family. In terms of assembly, monomer.

It localises to the cytoplasm. Functionally, IF-3 binds to the 30S ribosomal subunit and shifts the equilibrium between 70S ribosomes and their 50S and 30S subunits in favor of the free subunits, thus enhancing the availability of 30S subunits on which protein synthesis initiation begins. The sequence is that of Translation initiation factor IF-3 from Methylobacterium sp. (strain 4-46).